Reading from the N-terminus, the 262-residue chain is Acyl-[acyl-carrier-protein]--UDP-N-acetylglucosamine O-acyltransferase (262 aa).

The protein belongs to the transferase hexapeptide repeat family. LpxA subfamily. In terms of assembly, homotrimer.

It is found in the cytoplasm. It carries out the reaction a (3R)-hydroxyacyl-[ACP] + UDP-N-acetyl-alpha-D-glucosamine = a UDP-3-O-[(3R)-3-hydroxyacyl]-N-acetyl-alpha-D-glucosamine + holo-[ACP]. The protein operates within glycolipid biosynthesis; lipid IV(A) biosynthesis; lipid IV(A) from (3R)-3-hydroxytetradecanoyl-[acyl-carrier-protein] and UDP-N-acetyl-alpha-D-glucosamine: step 1/6. Functionally, involved in the biosynthesis of lipid A, a phosphorylated glycolipid that anchors the lipopolysaccharide to the outer membrane of the cell. The chain is Acyl-[acyl-carrier-protein]--UDP-N-acetylglucosamine O-acyltransferase from Paraburkholderia xenovorans (strain LB400).